Consider the following 130-residue polypeptide: Holo-[acyl-carrier-protein] synthase (130 aa).

Mg(2+) contacts are provided by Asp9 and Glu58.

Belongs to the P-Pant transferase superfamily. AcpS family. Mg(2+) serves as cofactor.

The protein localises to the cytoplasm. The catalysed reaction is apo-[ACP] + CoA = holo-[ACP] + adenosine 3',5'-bisphosphate + H(+). In terms of biological role, transfers the 4'-phosphopantetheine moiety from coenzyme A to a Ser of acyl-carrier-protein. This is Holo-[acyl-carrier-protein] synthase from Mycobacterium bovis (strain ATCC BAA-935 / AF2122/97).